A 681-amino-acid chain; its full sequence is Glutamine--fructose-6-phosphate aminotransferase [isomerizing] 1 (681 aa).

The active-site For GATase activity is the Cys2. The 286-residue stretch at 2-287 (CGIFAYLNYH…DDDVAAVVDG (286 aa)) folds into the Glutamine amidotransferase type-2 domain. Ser103 and Ser243 each carry phosphoserine. Residues 295–662 (KRTARDHPGR…LQLLAFHLAV (368 aa)) form an isomerase region. SIS domains are found at residues 359–498 (HIKE…DRIS) and 530–671 (LATE…VDFP). Substrate contacts are provided by residues 376–377 (TS), 421–423 (SQS), Thr426, and His577.

As to quaternary structure, homotetramer, may also exist as homodimers.

The catalysed reaction is D-fructose 6-phosphate + L-glutamine = D-glucosamine 6-phosphate + L-glutamate. It participates in nucleotide-sugar biosynthesis; UDP-N-acetyl-alpha-D-glucosamine biosynthesis; alpha-D-glucosamine 6-phosphate from D-fructose 6-phosphate: step 1/1. Inhibited by 4,4'-dithiodipyridine. Functionally, controls the flux of glucose into the hexosamine pathway. Most likely involved in regulating the availability of precursors for N- and O-linked glycosylation of proteins. Regulates the circadian expression of clock genes BMAL1 and CRY1. Has a role in fine tuning the metabolic fluctuations of cytosolic UDP-GlcNAc and its effects on hyaluronan synthesis that occur during tissue remodeling. In Rattus norvegicus (Rat), this protein is Glutamine--fructose-6-phosphate aminotransferase [isomerizing] 1 (Gfpt1).